The chain runs to 534 residues: Serine/threonine-protein kinase NLK (534 aa).

Sufficient for interaction with DAPK3 regions lie at residues 8–132 (LVSC…KAHH) and 131–423 (HHHQ…SKRI). 2 required for interaction with TAB2 regions span residues 8–311 (LVSC…VVTQ) and 441–534 (YHTC…LVWE). 2 disordered regions span residues 29-79 (AAAA…SSAA) and 97-147 (QQPY…DIEP). Residues 33–61 (GHHHHHHHHLPHLPPPHLHHHHHPQHHLH) show a composition bias toward basic residues. The span at 110–126 (PGPAAAAPAQVQAAAAA) shows a compositional bias: low complexity. A compositionally biased stretch (basic residues) spans 129–138 (KAHHHQHSHH). Positions 145–434 (IEPDRPIGYG…AKDALAHPYL (290 aa)) constitute a Protein kinase domain. Residues 151–159 (IGYGAFGVV) and lysine 174 contribute to the ATP site. The active-site Proton acceptor is the aspartate 271. Threonine 305 carries the post-translational modification Phosphothreonine; by autocatalysis. The TQE signature appears at 305–307 (TQE). Residues 435–534 (DEGRLRYHTC…EMPPSPLVWE (100 aa)) form a required for homodimerization and kinase activation and localization to the nucleus region. The residue at position 529 (serine 529) is a Phosphoserine.

It belongs to the protein kinase superfamily. CMGC Ser/Thr protein kinase family. MAP kinase subfamily. Homodimer. Homodimerization is required for intermolecular autophosphorylation, kinase activation and nuclear localization. May interact with components of cullin-RING-based SCF (SKP1-CUL1-F-box protein) E3 ubiquitin-protein ligase complexes. Interacts with LEF1, MEF2A, MYBL1 and MYBL2. Interacts with the upstream activating kinases HIPK2 and MAP3K7/TAK1. Interaction with MAP3K7/TAK1 seems to be indirect, and may be mediated by other proteins such as STAT3, TAB1 and TAB2. Interacts with and phosphorylates a number of transcription factors including FOXO1, FOXO3, FOXO4, MYB, NOTCH1 and TCF7L2/TCF4. Interacts with DAPK3/ZIPK, and this interaction may disrupt interaction with transcription factors such as TCF7L2/TCF4. Forms a transcriptional repressor complex with CHD7, PPARG and SETDB1. Interacts with RNF138/NARF. Interacts with ATF5; the interaction stabilizes ATF5 at the protein level in a kinase-independent manner. It depends on Mg(2+) as a cofactor. Phosphorylated on Thr-305. Intermolecular autophosphorylation on Thr-305 activates the enzyme.

It localises to the nucleus. The protein resides in the cytoplasm. It carries out the reaction L-seryl-[protein] + ATP = O-phospho-L-seryl-[protein] + ADP + H(+). The enzyme catalyses L-threonyl-[protein] + ATP = O-phospho-L-threonyl-[protein] + ADP + H(+). With respect to regulation, activated by the non-canonical Wnt signaling pathway, in which WNT5A leads to activation of MAP3K7/TAK1 and HIPK2, which subsequently phosphorylates and activates this protein. Activated by dimerization and subsequent intermolecular autophosphorylation on Thr-305. Other cytokines such as IL6 may also activate this regulatory circuit. Serine/threonine-protein kinase that regulates a number of transcription factors with key roles in cell fate determination. Positive effector of the non-canonical Wnt signaling pathway, acting downstream of WNT5A, MAP3K7/TAK1 and HIPK2. Negative regulator of the canonical Wnt/beta-catenin signaling pathway. Binds to and phosphorylates TCF7L2/TCF4 and LEF1, promoting the dissociation of the TCF7L2/LEF1/beta-catenin complex from DNA, as well as the ubiquitination and subsequent proteolysis of LEF1. Together these effects inhibit the transcriptional activation of canonical Wnt/beta-catenin target genes. Negative regulator of the Notch signaling pathway. Binds to and phosphorylates NOTCH1, thereby preventing the formation of a transcriptionally active ternary complex of NOTCH1, RBPJ/RBPSUH and MAML1. Negative regulator of the MYB family of transcription factors. Phosphorylation of MYB leads to its subsequent proteolysis while phosphorylation of MYBL1 and MYBL2 inhibits their interaction with the coactivator CREBBP. Other transcription factors may also be inhibited by direct phosphorylation of CREBBP itself. Acts downstream of IL6 and MAP3K7/TAK1 to phosphorylate STAT3, which is in turn required for activation of NLK by MAP3K7/TAK1. Upon IL1B stimulus, cooperates with ATF5 to activate the transactivation activity of C/EBP subfamily members. Phosphorylates ATF5 but also stabilizes ATF5 protein levels in a kinase-independent manner. Acts as an inhibitor of the mTORC1 complex in response to osmotic stress by mediating phosphorylation of RPTOR, thereby preventing recruitment of the mTORC1 complex to lysosomes. The chain is Serine/threonine-protein kinase NLK (NLK) from Bos taurus (Bovine).